Here is a 431-residue protein sequence, read N- to C-terminus: 23S rRNA (uracil(1939)-C(5))-methyltransferase RlmD (431 aa).

Positions 10–68 constitute a TRAM domain; the sequence is RVTTRQIITVKVNDLDSFGQGVARHNGKALFIPGLLPEESAEVIITEDKKQFARARVSR. [4Fe-4S] cluster-binding residues include C81, C87, C90, and C161. Positions 264, 293, 298, 314, 341, and 362 each coordinate S-adenosyl-L-methionine. C388 functions as the Nucleophile in the catalytic mechanism.

Belongs to the class I-like SAM-binding methyltransferase superfamily. RNA M5U methyltransferase family. RlmD subfamily.

The catalysed reaction is uridine(1939) in 23S rRNA + S-adenosyl-L-methionine = 5-methyluridine(1939) in 23S rRNA + S-adenosyl-L-homocysteine + H(+). In terms of biological role, catalyzes the formation of 5-methyl-uridine at position 1939 (m5U1939) in 23S rRNA. The chain is 23S rRNA (uracil(1939)-C(5))-methyltransferase RlmD from Salmonella typhi.